We begin with the raw amino-acid sequence, 122 residues long: Large ribosomal subunit protein uL14c (122 aa).

It belongs to the universal ribosomal protein uL14 family. Part of the 50S ribosomal subunit.

The protein localises to the plastid. The protein resides in the chloroplast. Binds to 23S rRNA. This chain is Large ribosomal subunit protein uL14c, found in Huperzia lucidula (Shining clubmoss).